The chain runs to 279 residues: Acetyl-coenzyme A carboxylase carboxyl transferase subunit beta (279 aa).

The 257-residue stretch at 23–279 (LWWKCEECGA…LVTLFSMLKV (257 aa)) folds into the CoA carboxyltransferase N-terminal domain. Zn(2+) contacts are provided by cysteine 27, cysteine 30, cysteine 46, and cysteine 49. The C4-type zinc-finger motif lies at 27–49 (CEECGAMLHKKQFEDHFFTCAEC).

The protein belongs to the AccD/PCCB family. As to quaternary structure, acetyl-CoA carboxylase is a heterohexamer composed of biotin carboxyl carrier protein (AccB), biotin carboxylase (AccC) and two subunits each of ACCase subunit alpha (AccA) and ACCase subunit beta (AccD). Zn(2+) is required as a cofactor.

The protein resides in the cytoplasm. It carries out the reaction N(6)-carboxybiotinyl-L-lysyl-[protein] + acetyl-CoA = N(6)-biotinyl-L-lysyl-[protein] + malonyl-CoA. Its pathway is lipid metabolism; malonyl-CoA biosynthesis; malonyl-CoA from acetyl-CoA: step 1/1. Component of the acetyl coenzyme A carboxylase (ACC) complex. Biotin carboxylase (BC) catalyzes the carboxylation of biotin on its carrier protein (BCCP) and then the CO(2) group is transferred by the transcarboxylase to acetyl-CoA to form malonyl-CoA. The sequence is that of Acetyl-coenzyme A carboxylase carboxyl transferase subunit beta from Pelodictyon phaeoclathratiforme (strain DSM 5477 / BU-1).